A 339-amino-acid polypeptide reads, in one-letter code: Cilia- and flagella-associated protein 36 (339 aa).

2 coiled-coil regions span residues 142–188 (ISDL…ENKQ) and 255–330 (NLSQ…EVIL). Disordered stretches follow at residues 177 to 212 (NLTLGEHSENKQSSGSERTPNNTELPVKTQKEEKQP) and 281 to 318 (KKQESKKMAQNSEEHEEKATCSKQEMTEEEKKSLQRRK). The segment covering 187–200 (KQSSGSERTPNNTE) has biased composition (polar residues). Basic and acidic residues predominate over residues 281–313 (KKQESKKMAQNSEEHEEKATCSKQEMTEEEKKS).

Belongs to the CFAP36 family.

Its subcellular location is the nucleus. It localises to the cytoplasm. It is found in the cell projection. The protein localises to the cilium. The protein resides in the flagellum. The polypeptide is Cilia- and flagella-associated protein 36 (Xenopus tropicalis (Western clawed frog)).